The following is a 249-amino-acid chain: 3-deoxy-manno-octulosonate cytidylyltransferase (249 aa).

The protein belongs to the KdsB family.

It localises to the cytoplasm. The catalysed reaction is 3-deoxy-alpha-D-manno-oct-2-ulosonate + CTP = CMP-3-deoxy-beta-D-manno-octulosonate + diphosphate. It participates in nucleotide-sugar biosynthesis; CMP-3-deoxy-D-manno-octulosonate biosynthesis; CMP-3-deoxy-D-manno-octulosonate from 3-deoxy-D-manno-octulosonate and CTP: step 1/1. It functions in the pathway bacterial outer membrane biogenesis; lipopolysaccharide biosynthesis. In terms of biological role, activates KDO (a required 8-carbon sugar) for incorporation into bacterial lipopolysaccharide in Gram-negative bacteria. This chain is 3-deoxy-manno-octulosonate cytidylyltransferase, found in Aliivibrio salmonicida (strain LFI1238) (Vibrio salmonicida (strain LFI1238)).